A 219-amino-acid chain; its full sequence is Thiamine-phosphate synthase (219 aa).

Residues Gln-44–Lys-48 and Asn-79 contribute to the 4-amino-2-methyl-5-(diphosphooxymethyl)pyrimidine site. Mg(2+) contacts are provided by Asp-80 and Asp-99. Ser-117 contacts 4-amino-2-methyl-5-(diphosphooxymethyl)pyrimidine. Thr-143–Thr-145 serves as a coordination point for 2-[(2R,5Z)-2-carboxy-4-methylthiazol-5(2H)-ylidene]ethyl phosphate. Lys-146 is a 4-amino-2-methyl-5-(diphosphooxymethyl)pyrimidine binding site. 2-[(2R,5Z)-2-carboxy-4-methylthiazol-5(2H)-ylidene]ethyl phosphate is bound by residues Gly-175 and Ile-195–Ser-196.

This sequence belongs to the thiamine-phosphate synthase family. The cofactor is Mg(2+).

It carries out the reaction 2-[(2R,5Z)-2-carboxy-4-methylthiazol-5(2H)-ylidene]ethyl phosphate + 4-amino-2-methyl-5-(diphosphooxymethyl)pyrimidine + 2 H(+) = thiamine phosphate + CO2 + diphosphate. It catalyses the reaction 2-(2-carboxy-4-methylthiazol-5-yl)ethyl phosphate + 4-amino-2-methyl-5-(diphosphooxymethyl)pyrimidine + 2 H(+) = thiamine phosphate + CO2 + diphosphate. The catalysed reaction is 4-methyl-5-(2-phosphooxyethyl)-thiazole + 4-amino-2-methyl-5-(diphosphooxymethyl)pyrimidine + H(+) = thiamine phosphate + diphosphate. The protein operates within cofactor biosynthesis; thiamine diphosphate biosynthesis; thiamine phosphate from 4-amino-2-methyl-5-diphosphomethylpyrimidine and 4-methyl-5-(2-phosphoethyl)-thiazole: step 1/1. Its function is as follows. Condenses 4-methyl-5-(beta-hydroxyethyl)thiazole monophosphate (THZ-P) and 2-methyl-4-amino-5-hydroxymethyl pyrimidine pyrophosphate (HMP-PP) to form thiamine monophosphate (TMP). The protein is Thiamine-phosphate synthase of Bacillus thuringiensis subsp. konkukian (strain 97-27).